A 477-amino-acid polypeptide reads, in one-letter code: Proton extrusion protein PxcA (477 aa).

Transmembrane regions (helical) follow at residues 239-259 (FILL…ITFV), 354-374 (GIKN…IIST), and 437-457 (FNFL…KYWI).

It belongs to the CemA family.

It is found in the cell inner membrane. In terms of biological role, required for H(+) efflux immediately after light irradiation to form a rapid H(+) concentration gradient across the thylakoid membranes. Together with PxcL, contributes to transient H(+) uptake following dark to light transition. The polypeptide is Proton extrusion protein PxcA (Trichodesmium erythraeum (strain IMS101)).